We begin with the raw amino-acid sequence, 187 residues long: Large ribosomal subunit protein bL9 (187 aa).

The tract at residues 168 to 187 (EEAPAEEDVAAEETSEAAEA) is disordered.

The protein belongs to the bacterial ribosomal protein bL9 family.

Its function is as follows. Binds to the 23S rRNA. In Paramagnetospirillum magneticum (strain ATCC 700264 / AMB-1) (Magnetospirillum magneticum), this protein is Large ribosomal subunit protein bL9.